The chain runs to 258 residues: Small ribosomal subunit protein uS3 (258 aa).

In terms of domain architecture, KH type-2 spans 43 to 111 (IRKLMSTGLE…QVQLNILEVK (69 aa)). A disordered region spans residues 217–258 (AREQASAAPRARGRADRPRGRRDEGAAPQQAAAPAATTGTEA). Positions 229–241 (GRADRPRGRRDEG) are enriched in basic and acidic residues. The segment covering 242–258 (AAPQQAAAPAATTGTEA) has biased composition (low complexity).

This sequence belongs to the universal ribosomal protein uS3 family. Part of the 30S ribosomal subunit. Forms a tight complex with proteins S10 and S14.

In terms of biological role, binds the lower part of the 30S subunit head. Binds mRNA in the 70S ribosome, positioning it for translation. The sequence is that of Small ribosomal subunit protein uS3 from Beutenbergia cavernae (strain ATCC BAA-8 / DSM 12333 / CCUG 43141 / JCM 11478 / NBRC 16432 / NCIMB 13614 / HKI 0122).